The sequence spans 232 residues: Large ribosomal subunit protein uL1 (232 aa).

Belongs to the universal ribosomal protein uL1 family. Part of the 50S ribosomal subunit.

Its function is as follows. Binds directly to 23S rRNA. The L1 stalk is quite mobile in the ribosome, and is involved in E site tRNA release. In terms of biological role, protein L1 is also a translational repressor protein, it controls the translation of the L11 operon by binding to its mRNA. This Bacillus velezensis (strain DSM 23117 / BGSC 10A6 / LMG 26770 / FZB42) (Bacillus amyloliquefaciens subsp. plantarum) protein is Large ribosomal subunit protein uL1.